The following is a 109-amino-acid chain: RNA-binding protein Hfq (109 aa).

The 60-residue stretch at Asp9–Val68 folds into the Sm domain. A disordered region spans residues Pro77–Glu109.

This sequence belongs to the Hfq family. In terms of assembly, homohexamer.

Its function is as follows. RNA chaperone that binds small regulatory RNA (sRNAs) and mRNAs to facilitate mRNA translational regulation in response to envelope stress, environmental stress and changes in metabolite concentrations. Also binds with high specificity to tRNAs. The sequence is that of RNA-binding protein Hfq from Francisella tularensis subsp. holarctica (strain FTNF002-00 / FTA).